A 485-amino-acid polypeptide reads, in one-letter code: Glutamyl-tRNA(Gln) amidotransferase subunit A (485 aa).

Residues lysine 74 and serine 149 each act as charge relay system in the active site. The active-site Acyl-ester intermediate is the serine 173.

This sequence belongs to the amidase family. GatA subfamily. Heterotrimer of A, B and C subunits.

It catalyses the reaction L-glutamyl-tRNA(Gln) + L-glutamine + ATP + H2O = L-glutaminyl-tRNA(Gln) + L-glutamate + ADP + phosphate + H(+). Allows the formation of correctly charged Gln-tRNA(Gln) through the transamidation of misacylated Glu-tRNA(Gln) in organisms which lack glutaminyl-tRNA synthetase. The reaction takes place in the presence of glutamine and ATP through an activated gamma-phospho-Glu-tRNA(Gln). This chain is Glutamyl-tRNA(Gln) amidotransferase subunit A, found in Janthinobacterium sp. (strain Marseille) (Minibacterium massiliensis).